Consider the following 514-residue polypeptide: Respiratory nitrate reductase 2 beta chain (514 aa).

4Fe-4S ferredoxin-type domains lie at 7 to 35 (VGMVLNLDKCIGCHTCSVTCKNVWTGREG), 174 to 205 (TFMMYLPRLCEHCLNPSCVATCPSGAIYKREE), and 207 to 236 (GIVLIDQDKCRGWRLCISGCPYKKIYFNWK). Cys-16, Cys-19, Cys-22, Cys-26, Cys-183, Cys-186, and Cys-191 together coordinate [4Fe-4S] cluster. [3Fe-4S] cluster-binding residues include Cys-195, Cys-216, and Cys-222. [4Fe-4S] cluster-binding residues include Cys-226, Cys-243, Cys-246, Cys-258, and Cys-262.

As to quaternary structure, dimer of heterotrimers each composed of an alpha, a beta and a gamma chain. Alpha and beta are catalytic chains; gamma chains are involved in binding the enzyme complex to the cytoplasmic membrane. [4Fe-4S] cluster is required as a cofactor. It depends on [3Fe-4S] cluster as a cofactor.

It is found in the cell membrane. The enzyme catalyses nitrate + a quinol = a quinone + nitrite + H2O. This is a second nitrate reductase enzyme which can substitute for the NRA enzyme and allows E.coli to use nitrate as an electron acceptor during anaerobic growth. The beta chain is an electron transfer unit containing four cysteine clusters involved in the formation of iron-sulfur centers. Electrons are transferred from the gamma chain to the molybdenum cofactor of the alpha subunit. The polypeptide is Respiratory nitrate reductase 2 beta chain (narY) (Escherichia coli (strain K12)).